Here is a 98-residue protein sequence, read N- to C-terminus: Integration host factor subunit alpha (98 aa).

This sequence belongs to the bacterial histone-like protein family. Heterodimer of an alpha and a beta chain.

Functionally, this protein is one of the two subunits of integration host factor, a specific DNA-binding protein that functions in genetic recombination as well as in transcriptional and translational control. The protein is Integration host factor subunit alpha of Marinomonas sp. (strain MWYL1).